A 419-amino-acid chain; its full sequence is O-methyltransferase desB (419 aa).

Residues 255-256 (GG), Asp-280, 306-307 (DF), and Arg-323 each bind S-adenosyl-L-methionine. The Proton acceptor role is filled by His-326.

The protein belongs to the class I-like SAM-binding methyltransferase superfamily. Cation-independent O-methyltransferase family. The cofactor is S-adenosyl-L-methionine.

It participates in secondary metabolite biosynthesis. Functionally, non-reducing polyketide synthase; part of the gene cluster that mediates the biosynthesis of the bicoumarin desertorin. The non-reducing polyketide synthase desS first catalyzes the formation of the pentaketidic 4,7-dihydroxy-5-methylcoumarin from acetyl coenzyme A and 4 malonyl coenzyme A molecules. Further O-methylation by desB leads to the formation of 7-demethylsiderin. Then, an oxidative phenol coupling catalyzed by the cytochrome P450 monooxygenase desC forms the 6,8'-dimer M-desertorin A via dimerization the monomeric precursor, 7-demethylsiderin. M-desertorin A is further converted to M-desertorin C. In Aspergillus desertorum (Emericella desertorum), this protein is O-methyltransferase desB.